We begin with the raw amino-acid sequence, 32 residues long: QAVMNPENTFYSVKRIINEPTAASLAYGFDKK.

This sequence belongs to the heat shock protein 70 family.

Acts as a chaperone. The protein is Chaperone protein DnaK of Anabaena sp. (strain L31).